The primary structure comprises 246 residues: Homeobox protein SIX6 (246 aa).

Positions 126–186 (WDGEQKTHCF…KNRRQRDRAA (61 aa)) form a DNA-binding region, homeobox. Residues 190–246 (NRLQQQVLSQGPGRVLRSEGEGTPEVLGVASSPAASLSSKAATSAISITSSDSECDI) form a disordered region. Thr212 bears the Phosphothreonine mark. Low complexity predominate over residues 219-246 (ASSPAASLSSKAATSAISITSSDSECDI). A phosphoserine mark is found at Ser221, Ser225, Ser227, and Ser228.

The protein belongs to the SIX/Sine oculis homeobox family. In terms of assembly, interacts with TLE4 and TLE5. In the developing embryo, expressed mainly in the ventral optic stalk, optic chiasma, the neural retina and the primordial tissues that give rise to the pituitary/hypothalamus axis. Not expressed in the lens placode.

The protein resides in the nucleus. Functionally, may be involved in eye development. The protein is Homeobox protein SIX6 (Six6) of Mus musculus (Mouse).